We begin with the raw amino-acid sequence, 323 residues long: V-type ATP synthase subunit C (323 aa).

This sequence belongs to the V-ATPase V0D/AC39 subunit family.

Functionally, produces ATP from ADP in the presence of a proton gradient across the membrane. This Thermus thermophilus (strain ATCC 27634 / DSM 579 / HB8) protein is V-type ATP synthase subunit C (atpC).